The following is a 227-amino-acid chain: Cytochrome c oxidase subunit 2 (227 aa).

Residues 1 to 14 lie on the Mitochondrial intermembrane side of the membrane; that stretch reads MAYPFQLGLQDATS. Residues 15–45 traverse the membrane as a helical segment; that stretch reads PIMEELLHFHDHTLMIVFLISSLVLYIISLM. Residues 46–59 lie on the Mitochondrial matrix side of the membrane; the sequence is LTTKLTHTSTMDAQ. The chain crosses the membrane as a helical span at residues 60–87; the sequence is EVETVWTILPAIILILIALPSLRILYMM. Topologically, residues 88–227 are mitochondrial intermembrane; sequence DEINNPSLTV…YFETWSALMV (140 aa). Residues His-161, Cys-196, Glu-198, Cys-200, His-204, and Met-207 each coordinate Cu cation. Mg(2+) is bound at residue Glu-198. Tyr-218 is modified (phosphotyrosine).

This sequence belongs to the cytochrome c oxidase subunit 2 family. Component of the cytochrome c oxidase (complex IV, CIV), a multisubunit enzyme composed of 14 subunits. The complex is composed of a catalytic core of 3 subunits MT-CO1, MT-CO2 and MT-CO3, encoded in the mitochondrial DNA, and 11 supernumerary subunits COX4I, COX5A, COX5B, COX6A, COX6B, COX6C, COX7A, COX7B, COX7C, COX8 and NDUFA4, which are encoded in the nuclear genome. The complex exists as a monomer or a dimer and forms supercomplexes (SCs) in the inner mitochondrial membrane with NADH-ubiquinone oxidoreductase (complex I, CI) and ubiquinol-cytochrome c oxidoreductase (cytochrome b-c1 complex, complex III, CIII), resulting in different assemblies (supercomplex SCI(1)III(2)IV(1) and megacomplex MCI(2)III(2)IV(2)). Found in a complex with TMEM177, COA6, COX18, COX20, SCO1 and SCO2. Interacts with TMEM177 in a COX20-dependent manner. Interacts with COX20. Interacts with COX16. Requires Cu cation as cofactor.

It is found in the mitochondrion inner membrane. It carries out the reaction 4 Fe(II)-[cytochrome c] + O2 + 8 H(+)(in) = 4 Fe(III)-[cytochrome c] + 2 H2O + 4 H(+)(out). Its function is as follows. Component of the cytochrome c oxidase, the last enzyme in the mitochondrial electron transport chain which drives oxidative phosphorylation. The respiratory chain contains 3 multisubunit complexes succinate dehydrogenase (complex II, CII), ubiquinol-cytochrome c oxidoreductase (cytochrome b-c1 complex, complex III, CIII) and cytochrome c oxidase (complex IV, CIV), that cooperate to transfer electrons derived from NADH and succinate to molecular oxygen, creating an electrochemical gradient over the inner membrane that drives transmembrane transport and the ATP synthase. Cytochrome c oxidase is the component of the respiratory chain that catalyzes the reduction of oxygen to water. Electrons originating from reduced cytochrome c in the intermembrane space (IMS) are transferred via the dinuclear copper A center (CU(A)) of subunit 2 and heme A of subunit 1 to the active site in subunit 1, a binuclear center (BNC) formed by heme A3 and copper B (CU(B)). The BNC reduces molecular oxygen to 2 water molecules using 4 electrons from cytochrome c in the IMS and 4 protons from the mitochondrial matrix. The protein is Cytochrome c oxidase subunit 2 (MT-CO2) of Canis lupus familiaris (Dog).